We begin with the raw amino-acid sequence, 831 residues long: uncharacterized protein (831 aa).

Residues 1–146 (MDIFDSTITS…RAFSILSGVA (146 aa)) form the CID domain. 4 disordered regions span residues 205–233 (SSSS…SSIS), 265–354 (KEHF…NYNN), 434–480 (IGNS…NEDS), and 572–831 (CGAD…SNRH). Low complexity-rich tracts occupy residues 272-354 (NDTS…NYNN) and 434-477 (IGNS…NNNN). 2 stretches are compositionally biased toward basic and acidic residues: residues 592 to 601 (NENKQNDSHR) and 611 to 813 (SRGE…RSKE). Positions 817-831 (NNDNRSSSNRSSNRH) are enriched in low complexity.

This is an uncharacterized protein from Dictyostelium discoideum (Social amoeba).